We begin with the raw amino-acid sequence, 148 residues long: UPF0540 protein At1g62000 (148 aa).

A signal peptide spans 1–21; the sequence is MNATKFVVLLVIGILCAIVTA. The span at 123-132 shows a compositional bias: low complexity; the sequence is RANGKVASAS. The segment at 123 to 148 is disordered; it reads RANGKVASASRVKGSSEKKKGKGKKD.

The protein belongs to the UPF0540 family.

This chain is UPF0540 protein At1g62000, found in Arabidopsis thaliana (Mouse-ear cress).